The chain runs to 501 residues: ATP synthase subunit alpha (501 aa).

169–176 (GDRQTGKT) lines the ATP pocket.

Belongs to the ATPase alpha/beta chains family. In terms of assembly, F-type ATPases have 2 components, CF(1) - the catalytic core - and CF(0) - the membrane proton channel. CF(1) has five subunits: alpha(3), beta(3), gamma(1), delta(1), epsilon(1). CF(0) has three main subunits: a(1), b(2) and c(9-12). The alpha and beta chains form an alternating ring which encloses part of the gamma chain. CF(1) is attached to CF(0) by a central stalk formed by the gamma and epsilon chains, while a peripheral stalk is formed by the delta and b chains.

It localises to the cell inner membrane. The catalysed reaction is ATP + H2O + 4 H(+)(in) = ADP + phosphate + 5 H(+)(out). In terms of biological role, produces ATP from ADP in the presence of a proton gradient across the membrane. The alpha chain is a regulatory subunit. The polypeptide is ATP synthase subunit alpha (Campylobacter jejuni subsp. jejuni serotype O:23/36 (strain 81-176)).